Reading from the N-terminus, the 98-residue chain is NADH-ubiquinone oxidoreductase chain 4L (98 aa).

The next 3 membrane-spanning stretches (helical) occupy residues 1–21 (MSLV…GLLM), 29–49 (SLLC…IMIL), and 61–81 (IILL…LVMV).

Belongs to the complex I subunit 4L family. Core subunit of respiratory chain NADH dehydrogenase (Complex I) which is composed of 45 different subunits.

It is found in the mitochondrion inner membrane. It carries out the reaction a ubiquinone + NADH + 5 H(+)(in) = a ubiquinol + NAD(+) + 4 H(+)(out). In terms of biological role, core subunit of the mitochondrial membrane respiratory chain NADH dehydrogenase (Complex I) which catalyzes electron transfer from NADH through the respiratory chain, using ubiquinone as an electron acceptor. Part of the enzyme membrane arm which is embedded in the lipid bilayer and involved in proton translocation. The sequence is that of NADH-ubiquinone oxidoreductase chain 4L (MT-ND4L) from Urotrichus talpoides (Japanese shrew mole).